The following is a 376-amino-acid chain: MASGRKAALDAALKKIEKDFGKGSIMRLGENVHTQVDVISTGSLKLDIALGVGGYPKGRIIEVFGPESSGKTTVALHAAAEVQKQGGTAAYIDAENSLDAKYAQALGVNVDDLLLSQPDTGEQGLEIADDLVNSGAIDLLVIDSVAALVPRAEIEGEMGDSHVGLQARLMSQALRKLAGTLNRTGTIAIFINQIREKIGIMFGNPETTPGGRALKFYSTVRLEVRRSAQIKDGTNIVGNNTKIKVVKNKVAPPFKVAEVDIMYGKGISQTGELIDLAVDKDIINKSGAWYAYQGEKIGQGRVNAISWLDSPEHKKEHDEIFTSVRDQYGIGEKKDSDEDPGDNKKSKDSASDPFDDPNYNPKSSDPGDDLSDDDIY.

65–72 lines the ATP pocket; that stretch reads GPESSGKT. Positions 316–376 are disordered; that stretch reads EHDEIFTSVR…GDDLSDDDIY (61 aa). Residues 331 to 350 show a composition bias toward basic and acidic residues; that stretch reads GEKKDSDEDPGDNKKSKDSA. Acidic residues predominate over residues 366-376; that stretch reads PGDDLSDDDIY.

The protein belongs to the RecA family.

Its subcellular location is the cytoplasm. Its function is as follows. Can catalyze the hydrolysis of ATP in the presence of single-stranded DNA, the ATP-dependent uptake of single-stranded DNA by duplex DNA, and the ATP-dependent hybridization of homologous single-stranded DNAs. It interacts with LexA causing its activation and leading to its autocatalytic cleavage. The polypeptide is Protein RecA (Oenococcus oeni (strain ATCC BAA-331 / PSU-1)).